The chain runs to 178 residues: Oligoribonuclease (178 aa).

The region spanning 7–168 is the Exonuclease domain; sequence LIWIDLEMTG…DDIRESIAEL (162 aa). Y128 is an active-site residue.

It belongs to the oligoribonuclease family.

It localises to the cytoplasm. Its function is as follows. 3'-to-5' exoribonuclease specific for small oligoribonucleotides. The chain is Oligoribonuclease from Pseudomonas syringae pv. syringae (strain B728a).